The primary structure comprises 231 residues: Uracil-DNA glycosylase (231 aa).

The active-site Proton acceptor is the aspartate 70.

The protein belongs to the uracil-DNA glycosylase (UDG) superfamily. UNG family.

It is found in the cytoplasm. The enzyme catalyses Hydrolyzes single-stranded DNA or mismatched double-stranded DNA and polynucleotides, releasing free uracil.. Its function is as follows. Excises uracil residues from the DNA which can arise as a result of misincorporation of dUMP residues by DNA polymerase or due to deamination of cytosine. The chain is Uracil-DNA glycosylase from Pseudomonas fluorescens (strain Pf0-1).